A 193-amino-acid polypeptide reads, in one-letter code: Potassium-transporting ATPase KdpC subunit (193 aa).

The helical transmembrane segment at 14 to 34 (ITFTFLVLCGLVYPLIVTGIA) threads the bilayer.

Belongs to the KdpC family. The system is composed of three essential subunits: KdpA, KdpB and KdpC.

The protein localises to the cell membrane. Part of the high-affinity ATP-driven potassium transport (or Kdp) system, which catalyzes the hydrolysis of ATP coupled with the electrogenic transport of potassium into the cytoplasm. This subunit acts as a catalytic chaperone that increases the ATP-binding affinity of the ATP-hydrolyzing subunit KdpB by the formation of a transient KdpB/KdpC/ATP ternary complex. The chain is Potassium-transporting ATPase KdpC subunit from Bacillus cereus (strain B4264).